The chain runs to 188 residues: Large ribosomal subunit protein eL18 (188 aa).

The protein belongs to the eukaryotic ribosomal protein eL18 family.

It is found in the cytoplasm. This chain is Large ribosomal subunit protein eL18 (RpL18), found in Drosophila melanogaster (Fruit fly).